The sequence spans 311 residues: MFKIVFFGTSTLSKKCLEQLFYDNDFEICAVVTQPDKINHRNNKIVPSDVKSFCLEKNITFFQPKQSISIKADLEKLKADIGICVSFGQYLHQDIIDLFPNKVINLHPSKLPLLRGGAPLHWTIINGFKKSALSVIQLVKKMDAGPIWKQQDFLVNNDWNTGDLSIYVEEHSPSFLIECTKEILNKKGKWFEQIGEPTFGLNIRKEQEHLDLNQIYKSFLNWVKGLAPKPGGWLSFEGKNIKIFKAKYVSKSNYKHQLGEIVNISRKGINIALKSNEIISIEKIQIPGKRVMEVSEIINGKHPFVVGKCFK.

Position 109-112 (109-112) interacts with (6S)-5,6,7,8-tetrahydrofolate; sequence SKLP.

Belongs to the Fmt family.

The enzyme catalyses L-methionyl-tRNA(fMet) + (6R)-10-formyltetrahydrofolate = N-formyl-L-methionyl-tRNA(fMet) + (6S)-5,6,7,8-tetrahydrofolate + H(+). In terms of biological role, attaches a formyl group to the free amino group of methionyl-tRNA(fMet). The formyl group appears to play a dual role in the initiator identity of N-formylmethionyl-tRNA by promoting its recognition by IF2 and preventing the misappropriation of this tRNA by the elongation apparatus. In Mycoplasma genitalium (strain ATCC 33530 / DSM 19775 / NCTC 10195 / G37) (Mycoplasmoides genitalium), this protein is Methionyl-tRNA formyltransferase (fmt).